The following is a 707-amino-acid chain: B-cell lymphoma 6 protein homolog (707 aa).

A BTB domain is found at 32 to 99; that stretch reads TDVVIVVSRE…MYTSRLNLRE (68 aa). Positions 275-350 are disordered; it reads HYSVPEGPKP…QPNSPTESCS (76 aa). Over residues 299–315 the composition is skewed to basic and acidic residues; that stretch reads KASKEEERPSSEDEIAL. A compositionally biased stretch (polar residues) spans 331–350; it reads SPQSPQKSDCQPNSPTESCS. Ser-334 carries the phosphoserine modification. A Phosphoserine; by MAPK1 modification is found at Ser-344. Residue Ser-362 is modified to Phosphoserine. A required for interaction with NuRD complex and for transcriptional repressor activity region spans residues 377-380; sequence KKYK. Lys-380 is subject to N6-acetyllysine; by EP300. The residue at position 405 (Ser-405) is a Phosphoserine. Positions 405–469 are disordered; the sequence is SPRAYPAPPA…RSSSESHSPL (65 aa). Residues 409-420 are compositionally biased toward pro residues; that stretch reads YPAPPACQPPME. The segment covering 425-452 has biased composition (polar residues); that stretch reads DLQSPTKLSASGEDSTIPQASRLNNLVN. Low complexity predominate over residues 458 to 467; it reads SPRSSSESHS. 6 consecutive C2H2-type zinc fingers follow at residues 519–542, 547–569, 575–597, 603–625, 631–653, and 659–682; these read FFCN…LQTH, YKCD…KTVH, YRCN…TRIH, YKCE…VLIH, YPCE…LRIH, and YHCE…RQKH.

Homodimer. Interacts (via BTB domain) with the corepressors BCOR, NCOR1 and SMRT/NCOR2; the interactions are direct. Forms preferably ternary complexes with BCOR and SMRT/NCOR2 on target gene promoters but, on enhancer elements, interacts with SMRT/NCOR2 and HDAC3 to repress proximal gene expression. Interacts with histone deacetylases HDAC2, HDAC5 and HDAC9 (via the catalytic domain). Interacts with ZBTB7 and BCL6B. Interacts with SCF(FBXO11) complex; the interaction is independent of phosphorylation and promotes ubiquitination. Interacts (when phosphorylated) with PIN1; the interaction is required for BCL6 degradation upon genotoxic stress. Interacts with ZBTB17; inhibits ZBTB17 transcriptional activity. Interacts with CTBP1, autoinhibits its transcriptional expression. Interacts with NOTCH1 NCID and SIRT1; leads to a epigenetic repression of selective NOTCH1-target genes. Interacts (nor via BTB domain neither acetylated) with the NuRD complex components CHD4, HDAC1, MBD3 and MTA3; the interaction with MTA3 inhibits BCL6 acetylation and is required for BCL6 transpriptional repression. Post-translationally, phosphorylated by MAPK1 in response to antigen receptor activation at Ser-334 and Ser-344. Phosphorylated by ATM in response to genotoxic stress. Phosphorylation induces its degradation by ubiquitin/proteasome pathway. In terms of processing, polyubiquitinated. Polyubiquitinated by SCF(FBXO11), leading to its degradation by the proteasome. Ubiquitinated by the SCF(FBXL17) complex, leading to its degradation by the proteasome: ubiquitination by the SCF(FBXL17) complex takes place when aberrant BTB domain dimers are formed. Acetylated at Lys-380 by EP300 which inhibits the interaction with NuRD complex and the transcriptional repressor function. Deacetylated by HDAC- and SIR2-dependent pathways. Expressed at least in germinal center B-cells of spleen.

The protein resides in the nucleus. In terms of biological role, transcriptional repressor mainly required for germinal center (GC) formation and antibody affinity maturation which has different mechanisms of action specific to the lineage and biological functions. Forms complexes with different corepressors and histone deacetylases to repress the transcriptional expression of different subsets of target genes. Represses its target genes by binding directly to the DNA sequence 5'-TTCCTAGAA-3' (BCL6-binding site) or indirectly by repressing the transcriptional activity of transcription factors. In GC B-cells, represses genes that function in differentiation, inflammation, apoptosis and cell cycle control, also autoregulates its transcriptional expression and up-regulates, indirectly, the expression of some genes important for GC reactions, such as AICDA, through the repression of microRNAs expression, like miR155. An important function is to allow GC B-cells to proliferate very rapidly in response to T-cell dependent antigens and tolerate the physiological DNA breaks required for immunglobulin class switch recombination and somatic hypermutation without inducing a p53/TP53-dependent apoptotic response. In follicular helper CD4(+) T-cells (T(FH) cells), promotes the expression of T(FH)-related genes but inhibits the differentiation of T(H)1, T(H)2 and T(H)17 cells. Also required for the establishment and maintenance of immunological memory for both T- and B-cells. Suppresses macrophage proliferation through competition with STAT5 for STAT-binding motifs binding on certain target genes, such as CCL2 and CCND2. In response to genotoxic stress, controls cell cycle arrest in GC B-cells in both p53/TP53-dependedent and -independent manners. Besides, also controls neurogenesis through the alteration of the composition of NOTCH-dependent transcriptional complexes at selective NOTCH targets, such as HES5, including the recruitment of the deacetylase SIRT1 and resulting in an epigenetic silencing leading to neuronal differentiation. The polypeptide is B-cell lymphoma 6 protein homolog (Bcl6) (Mus musculus (Mouse)).